The following is a 1062-amino-acid chain: Translation initiation factor IF-2 (1062 aa).

The disordered stretch occupies residues 34–463 (SASSTVEAPV…RMGAMVPRGN (430 aa)). A compositionally biased stretch (pro residues) spans 76-121 (PTPPSRPGLAPRPGPRPVPGRPGPLGRPGPATPAPSPSPASPPLPA). Residues 122-153 (SPVQASPVQASPVQASPTSAPAAPRPAAASAV) show a composition bias toward low complexity. Over residues 154-178 (PAPPMPSVPSAPSGPRPGPNAPRPG) the composition is skewed to pro residues. The segment covering 198–214 (TAGGPTAGGPTAGGPTA) has biased composition (gly residues). The span at 294–305 (RPTPGGMPPRPG) shows a compositional bias: pro residues. 2 stretches are compositionally biased toward gly residues: residues 307-324 (PRSG…GTGG) and 344-430 (PGGG…GGRG). A compositionally biased stretch (basic residues) spans 431 to 442 (RPGRQRKSKRAK). A tr-type G domain is found at 555–727 (SRPPVVTVMG…IVLTADASLD (173 aa)). Positions 564-571 (GHVDHGKT) are G1. Residue 564 to 571 (GHVDHGKT) participates in GTP binding. The tract at residues 589–593 (GITQH) is G2. Positions 614 to 617 (DTPG) are G3. GTP contacts are provided by residues 614 to 618 (DTPGH) and 668 to 671 (NKVD). The interval 668 to 671 (NKVD) is G4. The interval 704 to 706 (SAR) is G5.

It belongs to the TRAFAC class translation factor GTPase superfamily. Classic translation factor GTPase family. IF-2 subfamily.

It localises to the cytoplasm. Functionally, one of the essential components for the initiation of protein synthesis. Protects formylmethionyl-tRNA from spontaneous hydrolysis and promotes its binding to the 30S ribosomal subunits. Also involved in the hydrolysis of GTP during the formation of the 70S ribosomal complex. This is Translation initiation factor IF-2 from Frankia casuarinae (strain DSM 45818 / CECT 9043 / HFP020203 / CcI3).